A 233-amino-acid polypeptide reads, in one-letter code: DnaA regulatory inactivator Hda (233 aa).

This sequence belongs to the DnaA family. HdA subfamily. In terms of assembly, the active form seems to be an ADP-bound monomer. Forms the RIDA complex (regulatory inactivation of DnaA) of ATP-DnaA, ADP-Hda and the DNA-loaded beta sliding clamp (dnaN).

Functionally, mediates the interaction of DNA replication initiator protein DnaA with DNA polymerase subunit beta sliding clamp (dnaN). Stimulates hydrolysis of ATP-DnaA to ADP-DnaA, rendering DnaA inactive for reinitiation, a process called regulatory inhibition of DnaA or RIDA. The protein is DnaA regulatory inactivator Hda of Shigella boydii serotype 4 (strain Sb227).